The following is a 575-amino-acid chain: Centrosomal protein POC5 (575 aa).

The disordered stretch occupies residues 1 to 26 (MSSDEEKYSLPVVQNDSSRGSSVSSN). 2 positions are modified to phosphoserine: S105 and S109. The stretch at 142 to 173 (HEILVSDFLVSDENLQKMENVLDLWSSGLKTN) is one Centrin-binding (CBR) 1 repeat. Positions 191-222 (MEMRKEKEKHAAHLKQLCNQINELKELQKTFE) form a coiled coil. 2 Centrin-binding (CBR) repeats span residues 231 to 262 (VISSLSHAIGKQKEKIELMRTFFHWRIGHVRA) and 263 to 295 (RQDVYEGKLADQYYQRTLLKKVWKVWRSVVQKQ). Positions 316 to 355 (SNDYEAKVAMLSGALENAKAEIQRMQHEKEHFEDSMKKAF) form a coiled coil. Disordered regions lie at residues 376-411 (AGIDSTNNKKEEYGPGVQGKEHSAHLDPSAPPMPLP) and 538-575 (KYPRTIHPESSTSASRSLGTRSAHTQSLTSVHSIKVVD). A compositionally biased stretch (basic and acidic residues) spans 382 to 400 (NNKKEEYGPGVQGKEHSAH). At K538 the chain carries N6-acetyllysine. The span at 545–569 (PESSTSASRSLGTRSAHTQSLTSVH) shows a compositional bias: polar residues. S564 bears the Phosphoserine mark.

It belongs to the POC5 family. In terms of assembly, interacts with CETN2 and CETN3. Forms a microtubule-associated complex with POC1B, CETN2 and FAM161A. Interacts with CCDC15. In terms of processing, hyperphosphorylated during recruitment to procentrioles in G2/M phase.

It is found in the cytoplasm. Its subcellular location is the cytoskeleton. The protein resides in the microtubule organizing center. It localises to the centrosome. The protein localises to the centriole. Functionally, essential for the assembly of the distal half of centrioles, required for centriole elongation. Acts as a negative regulator of centriole elongation. The polypeptide is Centrosomal protein POC5 (POC5) (Homo sapiens (Human)).